The following is a 392-amino-acid chain: L-rhamnonate dehydratase (392 aa).

Substrate is bound by residues histidine 22 and arginine 48. The Mg(2+) site is built by aspartate 214, glutamate 240, and glutamate 268. Histidine 318 (proton acceptor) is an active-site residue. Position 338 (glutamate 338) interacts with substrate.

The protein belongs to the mandelate racemase/muconate lactonizing enzyme family. RhamD subfamily. Homooctamer; tetramer of dimers. The cofactor is Mg(2+).

It carries out the reaction L-rhamnonate = 2-dehydro-3-deoxy-L-rhamnonate + H2O. Catalyzes the dehydration of L-rhamnonate to 2-keto-3-deoxy-L-rhamnonate (KDR). The chain is L-rhamnonate dehydratase from Paraburkholderia phytofirmans (strain DSM 17436 / LMG 22146 / PsJN) (Burkholderia phytofirmans).